A 133-amino-acid polypeptide reads, in one-letter code: Large-conductance mechanosensitive channel (133 aa).

Helical transmembrane passes span valine 14 to leucine 34 and phenylalanine 73 to valine 93.

The protein belongs to the MscL family. In terms of assembly, homopentamer.

It localises to the cell membrane. Channel that opens in response to stretch forces in the membrane lipid bilayer. May participate in the regulation of osmotic pressure changes within the cell. This Renibacterium salmoninarum (strain ATCC 33209 / DSM 20767 / JCM 11484 / NBRC 15589 / NCIMB 2235) protein is Large-conductance mechanosensitive channel.